The sequence spans 30 residues: Cycloviolacin-O18 (30 aa).

Positions 1–30 form a cross-link, cyclopeptide (Gly-Asn); sequence GIPCGESCVYIPCTVTALAGCKCKSKVCYN. Disulfide bonds link C4/C21, C8/C23, and C13/C28.

In terms of processing, this is a cyclic peptide. Expressed in leaves, petals and petioles but not in roots and runners (at protein level).

Its function is as follows. Probably participates in a plant defense mechanism. The sequence is that of Cycloviolacin-O18 from Viola odorata (Sweet violet).